The chain runs to 358 residues: ATP synthase gamma chain, chloroplastic (358 aa).

The transit peptide at 1–35 directs the protein to the chloroplast; that stretch reads MAAMLASKQGAFMGRSSFAPAPKGVASRGSLQVVA. The active site involves C123. The cysteines at positions 233 and 239 are disulfide-linked.

Belongs to the ATPase gamma chain family. In terms of assembly, F-type ATPases have 2 components, F(1) - the catalytic core - and F(0) - the membrane proton channel. F(1) has five subunits: alpha(3), beta(3), gamma(1), delta(1), epsilon(1). F(0) has four main subunits: a(1), b(1), b'(1) and c(10-14). The alpha and beta chains form an alternating ring which encloses part of the gamma chain. F(1) is attached to F(0) by a central stalk formed by the gamma and epsilon chains, while a peripheral stalk is formed by the delta, b and b' chains.

The protein localises to the plastid. The protein resides in the chloroplast thylakoid membrane. F(1)F(0) ATP synthase produces ATP from ADP in the presence of a proton or sodium gradient. F-type ATPases consist of two structural domains, F(1) containing the extramembraneous catalytic core and F(0) containing the membrane proton channel, linked together by a central stalk and a peripheral stalk. During catalysis, ATP synthesis in the catalytic domain of F(1) is coupled via a rotary mechanism of the central stalk subunits to proton translocation. Its function is as follows. Produces ATP from ADP in the presence of a proton gradient across the membrane. The gamma chain is believed to be important in regulating ATPase activity and the flow of protons through the CF(0) complex. In Chlamydomonas reinhardtii (Chlamydomonas smithii), this protein is ATP synthase gamma chain, chloroplastic.